The sequence spans 294 residues: uncharacterized protein (294 aa).

The next 3 helical transmembrane spans lie at 21-41 (AIVA…TFTF), 51-71 (PIIW…LWAA), and 77-97 (ILFS…VFLF). The interval 156-176 (HPVPFPAEPGSPDPVSPPPPI) is disordered. The stretch at 184–215 (ERAESLHAGNIELAEDLQRIQEMERNLENERS) forms a coiled coil. A compositionally biased stretch (basic and acidic residues) spans 265–277 (QQENESRLEERRF). Residues 265–294 (QQENESRLEERRFQSHSTNSLFEADSSRDN) are disordered.

It is found in the mitochondrion membrane. This is an uncharacterized protein from Arabidopsis thaliana (Mouse-ear cress).